Here is a 1049-residue protein sequence, read N- to C-terminus: Dyslexia-associated protein KIAA0319-like protein (1049 aa).

At 1 to 29 (MEKRLGVKPNPASWILSGYYWQTSAKWLR) the chain is on the cytoplasmic side. The helical transmembrane segment at 30-50 (TLYLFYTCFCFSVLWLSTDAS) threads the bilayer. The 79-residue stretch at 49–127 (ASESRCQQGK…AFRTHSSNSM (79 aa)) folds into the MANSC domain. At 51–932 (ESRCQQGKTQ…ESNCEWSVLY (882 aa)) the chain is on the extracellular side. Residues 234-277 (TTDLTAELPGGPKNVSAQPEIPEGLATTPSTQQVKSSEKTQIAV) are disordered. N-linked (GlcNAc...) asparagine glycans are attached at residues Asn-247, Asn-395, and Asn-487. 5 PKD domains span residues 310–401 (VVSA…VKPE), 409–498 (IAIV…VNKA), 504–594 (VANA…VQPE), 600–688 (QADA…VKEE), and 694–785 (IAKI…VKPD). A helical membrane pass occupies residues 933 to 953 (VIIATFVIVVALGILSWTVIC). The Cytoplasmic portion of the chain corresponds to 954–1049 (CCKRQKGKPK…KARSPREEIL (96 aa)). At Thr-974 the chain carries Phosphothreonine. Phosphoserine occurs at positions 978, 1009, and 1031. Positions 1022-1049 (GKLLHGQNGSVPNGQTPLKARSPREEIL) are disordered. Polar residues predominate over residues 1028 to 1037 (QNGSVPNGQT). Thr-1037 bears the Phosphothreonine mark.

In terms of assembly, interacts with RTN4R. In terms of processing, N-glycosylated.

It is found in the cytoplasmic granule membrane. It localises to the golgi apparatus membrane. The protein resides in the golgi apparatus. Its subcellular location is the trans-Golgi network membrane. The protein localises to the cell membrane. Possible role in axon guidance through interaction with RTN4R. The chain is Dyslexia-associated protein KIAA0319-like protein from Pongo abelii (Sumatran orangutan).